Consider the following 208-residue polypeptide: LexA repressor (208 aa).

The segment at residues 28–48 (RAEIARQLGFRSANAAEEHLK) is a DNA-binding region (H-T-H motif). Residues Ser125 and Lys162 each act as for autocatalytic cleavage activity in the active site.

Belongs to the peptidase S24 family. In terms of assembly, homodimer.

The catalysed reaction is Hydrolysis of Ala-|-Gly bond in repressor LexA.. Functionally, represses a number of genes involved in the response to DNA damage (SOS response), including recA and lexA. In the presence of single-stranded DNA, RecA interacts with LexA causing an autocatalytic cleavage which disrupts the DNA-binding part of LexA, leading to derepression of the SOS regulon and eventually DNA repair. This Alteromonas mediterranea (strain DSM 17117 / CIP 110805 / LMG 28347 / Deep ecotype) protein is LexA repressor.